The primary structure comprises 1025 residues: Multidrug resistance protein MdtC (1025 aa).

Transmembrane regions (helical) follow at residues 3-23 (FFAL…AITL), 333-353 (EVEQ…FLFL), 360-380 (IIPA…MYLC), 387-407 (LSLM…IVVL), 431-451 (VGFT…PLLL), 463-483 (FAVT…TLTP), 528-548 (LVGV…ISIP), 853-873 (VILI…LYES), 875-895 (VHPL…LLAL), 897-917 (LFNA…IGIV), 953-973 (PIMM…LSGG), and 984-1004 (ITIV…TPVV).

This sequence belongs to the resistance-nodulation-cell division (RND) (TC 2.A.6) family. MdtC subfamily. As to quaternary structure, part of a tripartite efflux system composed of MdtA, MdtB and MdtC. MdtC forms a heteromultimer with MdtB.

It localises to the cell inner membrane. Its function is as follows. The MdtABC tripartite complex confers resistance against novobiocin and deoxycholate. The protein is Multidrug resistance protein MdtC of Escherichia coli (strain SMS-3-5 / SECEC).